A 124-amino-acid chain; its full sequence is Outer dense fiber protein 2 (124 aa).

Residues 13-124 (KEDSERLMEQ…EAIMEQLKEL (112 aa)) are a coiled coil.

This sequence belongs to the ODF2 family. As to quaternary structure, self-associates. Associates with microtubules and forms a fibrillar structure partially linked to the microtubule network. Interacts through its C-terminus with PLK1. Interacts with ODF1. Interacts with MARK4; the interaction is required for localization of ODF2 to centrioles. Interacts with TSSK4. Interacts with AKNA. Interacts with QRICH2. Interacts with CFAP58. Interacts with BBOF1. Interacts with CCDC38. Interacts with CCDC42. Tyrosine phosphorylated. In terms of tissue distribution, detected in sperm flagella (at protein level).

It is found in the cytoplasm. It localises to the cytoskeleton. The protein resides in the microtubule organizing center. The protein localises to the centrosome. Its subcellular location is the cell projection. It is found in the cilium. It localises to the centriole. The protein resides in the spindle pole. The protein localises to the flagellum. Its function is as follows. Seems to be a major component of sperm tail outer dense fibers (ODF). ODFs are filamentous structures located on the outside of the axoneme in the midpiece and principal piece of the mammalian sperm tail and may help to maintain the passive elastic structures and elastic recoil of the sperm tail. May have a modulating influence on sperm motility. Functions as a general scaffold protein that is specifically localized at the distal/subdistal appendages of mother centrioles. Component of the centrosome matrix required for the localization of PLK1 and NIN to the centrosomes. Required for the formation and/or maintenance of normal CETN1 assembly. The sequence is that of Outer dense fiber protein 2 from Mesocricetus auratus (Golden hamster).